Reading from the N-terminus, the 396-residue chain is NADH-quinone oxidoreductase subunit D (396 aa).

The protein belongs to the complex I 49 kDa subunit family. NDH-1 is composed of 14 different subunits. Subunits NuoB, C, D, E, F, and G constitute the peripheral sector of the complex.

The protein localises to the cell inner membrane. It catalyses the reaction a quinone + NADH + 5 H(+)(in) = a quinol + NAD(+) + 4 H(+)(out). Its function is as follows. NDH-1 shuttles electrons from NADH, via FMN and iron-sulfur (Fe-S) centers, to quinones in the respiratory chain. The immediate electron acceptor for the enzyme in this species is believed to be ubiquinone. Couples the redox reaction to proton translocation (for every two electrons transferred, four hydrogen ions are translocated across the cytoplasmic membrane), and thus conserves the redox energy in a proton gradient. The protein is NADH-quinone oxidoreductase subunit D of Methylobacterium radiotolerans (strain ATCC 27329 / DSM 1819 / JCM 2831 / NBRC 15690 / NCIMB 10815 / 0-1).